A 550-amino-acid polypeptide reads, in one-letter code: Phosphatidylinositol 4-kinase gamma 2 (550 aa).

2 Ubiquitin-like domains span residues 34 to 111 and 112 to 190; these read SVLV…YDPL and LVTV…VEDT. The segment at 228 to 247 is disordered; it reads VDGLNKGSPPVRSAEGTGGT. The PI3K/PI4K catalytic domain maps to 234–532; that stretch reads GSPPVRSAEG…SVLPASSEAT (299 aa). The segment at 240 to 246 is G-loop; the sequence is SAEGTGG. ATP is bound by residues 241–247, lysine 263, and 359–362; these read AEGTGGT and QMFM. The interval 392–400 is catalytic loop; the sequence is ANADRHAGN. Residues 415 to 441 are activation loop; that stretch reads PIDHGYCLPENFEDCTFEWLYWPQAKL. An ATP-binding site is contributed by aspartate 417.

It belongs to the PI3/PI4-kinase family. Type II PI4K subfamily.

The protein resides in the membrane. It catalyses the reaction a 1,2-diacyl-sn-glycero-3-phospho-(1D-myo-inositol) + ATP = a 1,2-diacyl-sn-glycero-3-phospho-(1D-myo-inositol 4-phosphate) + ADP + H(+). The phosphorylation of phosphatidylinositol (PI) to PI4P is the first committed step in the generation of phosphatidylinositol 4,5-bisphosphate (PIP2), a precursor of the second messenger inositol 1,4,5-trisphosphate (InsP3). The polypeptide is Phosphatidylinositol 4-kinase gamma 2 (PI4KG2) (Arabidopsis thaliana (Mouse-ear cress)).